The primary structure comprises 648 residues: Cysteine-rich receptor-like protein kinase 38 (648 aa).

An N-terminal signal peptide occupies residues 1–25 (MKNSAAIFLTSSLILLLQTLHGVKA). 2 consecutive Gnk2-homologous domains span residues 26 to 127 (GFIC…DQST) and 140 to 247 (PSPV…FYPF). Over 26 to 278 (GFICVGSSFP…EAISITRLKG (253 aa)) the chain is Extracellular. Asparagine 37, asparagine 63, asparagine 151, asparagine 174, and asparagine 253 each carry an N-linked (GlcNAc...) asparagine glycan. A helical transmembrane segment spans residues 279-299 (GIIAIFVVPIVINLLVFIGLI). Topologically, residues 300–648 (RAYTRIRKSY…ELSITELSPR (349 aa)) are cytoplasmic. The Protein kinase domain maps to 339-611 (FSFENKIGQG…VIQWLGSETI (273 aa)). ATP-binding positions include 345–353 (IGQGGFGSV) and lysine 367. Tyrosine 412 is subject to Phosphotyrosine. Residue aspartate 464 is the Proton acceptor of the active site. Serine 468 bears the Phosphoserine mark. Threonine 504 is subject to Phosphothreonine. Tyrosine 512 is subject to Phosphotyrosine.

It belongs to the protein kinase superfamily. Ser/Thr protein kinase family. CRK subfamily.

It localises to the membrane. The enzyme catalyses L-seryl-[protein] + ATP = O-phospho-L-seryl-[protein] + ADP + H(+). It carries out the reaction L-threonyl-[protein] + ATP = O-phospho-L-threonyl-[protein] + ADP + H(+). The protein is Cysteine-rich receptor-like protein kinase 38 (CRK38) of Arabidopsis thaliana (Mouse-ear cress).